A 202-amino-acid chain; its full sequence is Transcription factor IBH1 (202 aa).

Pro residues predominate over residues 1-16 (MDAKRTPPPPTPPNPN). Residues 1–33 (MDAKRTPPPPTPPNPNPSVIGSGAAADGGGFGR) form a disordered region. One can recognise a bHLH domain in the interval 136-185 (TSAAARAVPPPPRQQGEPPRADALRRLVPGGAGMEYSSLLEETADYLRSL).

It belongs to the bHLH protein family. As to quaternary structure, interacts with ILI1.

Functionally, atypical and probable non DNA-binding bHLH transcription factor that acts as a negative regulator of cell elongation and plant development. Binds the transcription factor ILI1 and forms a heterodimer of antagonistic bHLH transcription factors that function downstream of BZR1 to mediate brassinosteroid regulation of cell elongation and lamina inclination. This Oryza sativa subsp. indica (Rice) protein is Transcription factor IBH1 (IBH1).